A 219-amino-acid chain; its full sequence is Ribose-5-phosphate isomerase A (219 aa).

Substrate-binding positions include 28 to 31 (SGST), 81 to 84 (DGAD), and 94 to 97 (KGGG). Residue Glu-103 is the Proton acceptor of the active site. Residue Lys-121 participates in substrate binding.

Belongs to the ribose 5-phosphate isomerase family. In terms of assembly, homodimer.

The enzyme catalyses aldehydo-D-ribose 5-phosphate = D-ribulose 5-phosphate. It functions in the pathway carbohydrate degradation; pentose phosphate pathway; D-ribose 5-phosphate from D-ribulose 5-phosphate (non-oxidative stage): step 1/1. Its function is as follows. Catalyzes the reversible conversion of ribose-5-phosphate to ribulose 5-phosphate. The chain is Ribose-5-phosphate isomerase A from Glaesserella parasuis serovar 5 (strain SH0165) (Haemophilus parasuis).